The following is a 440-amino-acid chain: Ribosomal protein uS12 methylthiotransferase RimO (440 aa).

An MTTase N-terminal domain is found at 2 to 117 (VKVGFVSLGC…LPNVIKKLYE (116 aa)). Residues Cys11, Cys47, Cys80, Cys156, Cys160, and Cys163 each coordinate [4Fe-4S] cluster. The 230-residue stretch at 142–371 (ATPKFYAYIK…LNLQRKISLE (230 aa)) folds into the Radical SAM core domain. The TRAM domain maps to 374–440 (RKRISKKYEV…FEYDLVGEVI (67 aa)).

It belongs to the methylthiotransferase family. RimO subfamily. [4Fe-4S] cluster is required as a cofactor.

Its subcellular location is the cytoplasm. The enzyme catalyses L-aspartate(89)-[ribosomal protein uS12]-hydrogen + (sulfur carrier)-SH + AH2 + 2 S-adenosyl-L-methionine = 3-methylsulfanyl-L-aspartate(89)-[ribosomal protein uS12]-hydrogen + (sulfur carrier)-H + 5'-deoxyadenosine + L-methionine + A + S-adenosyl-L-homocysteine + 2 H(+). Catalyzes the methylthiolation of an aspartic acid residue of ribosomal protein uS12. The sequence is that of Ribosomal protein uS12 methylthiotransferase RimO from Caldicellulosiruptor saccharolyticus (strain ATCC 43494 / DSM 8903 / Tp8T 6331).